The following is a 207-amino-acid chain: Holliday junction branch migration complex subunit RuvA (207 aa).

The domain I stretch occupies residues 1 to 71 (MIVSIAGKLV…RLTPRLIGFS (71 aa)). Positions 72-149 (TLPERQFFDL…RFALMVAGGE (78 aa)) are domain II. The tract at residues 150–155 (VADAME) is flexible linker. A domain III region spans residues 156-207 (VESPIVSDTYDALVTLGHSESDARKLIDETLATGKKFKDTESLLTAIYQRSK).

This sequence belongs to the RuvA family. In terms of assembly, homotetramer. Forms an RuvA(8)-RuvB(12)-Holliday junction (HJ) complex. HJ DNA is sandwiched between 2 RuvA tetramers; dsDNA enters through RuvA and exits via RuvB. An RuvB hexamer assembles on each DNA strand where it exits the tetramer. Each RuvB hexamer is contacted by two RuvA subunits (via domain III) on 2 adjacent RuvB subunits; this complex drives branch migration. In the full resolvosome a probable DNA-RuvA(4)-RuvB(12)-RuvC(2) complex forms which resolves the HJ.

Its subcellular location is the cytoplasm. In terms of biological role, the RuvA-RuvB-RuvC complex processes Holliday junction (HJ) DNA during genetic recombination and DNA repair, while the RuvA-RuvB complex plays an important role in the rescue of blocked DNA replication forks via replication fork reversal (RFR). RuvA specifically binds to HJ cruciform DNA, conferring on it an open structure. The RuvB hexamer acts as an ATP-dependent pump, pulling dsDNA into and through the RuvAB complex. HJ branch migration allows RuvC to scan DNA until it finds its consensus sequence, where it cleaves and resolves the cruciform DNA. This is Holliday junction branch migration complex subunit RuvA from Rhodopirellula baltica (strain DSM 10527 / NCIMB 13988 / SH1).